Consider the following 478-residue polypeptide: Transcript termination protein A18 (478 aa).

Positions 98–254 (KVELKRPMYV…NDVINVSNSS (157 aa)) constitute a Helicase ATP-binding domain. 111-118 (LACGFGKT) is a binding site for ATP. Residues 204–207 (DESH) carry the DESH box motif. Positions 307 to 454 (ILDTIIYDFE…IITLAIEKLG (148 aa)) constitute a Helicase C-terminal domain.

Belongs to the helicase family. Poxviruses subfamily. Interacts with G2. Might be part of a transcription complex composed at least of G2, A18, and H5.

It is found in the virion. Functionally, DNA helicase which seems to act as a postreplicative transcription termination factor. Involved in ATP-dependent release of nascent RNA. Forms a stable complex with single-stranded DNA, and to a lesser extent RNA. The protein is Transcript termination protein A18 of Erythrocebus patas (Red guenon).